We begin with the raw amino-acid sequence, 512 residues long: Protein maelstrom homolog (512 aa).

The HMG box DNA-binding region spans 9-75 (AKGPFYFFMM…NPKEAGGYGE (67 aa)). 3 disordered regions span residues 49 to 72 (APHEREPYNQRAKQNKANPKEAGG), 360 to 421 (RMSK…GTRA), and 439 to 465 (QSANRSPTKKNPWSRENKLTEVRDPQS). Residues 360–370 (RMSKLTTTSDN) are compositionally biased toward polar residues. The segment covering 379 to 388 (RSTDRTDRDV) has biased composition (basic and acidic residues). 2 stretches are compositionally biased toward polar residues: residues 393-421 (IYSSRAGTVTGKPSTIVPQQPASSGGTRA) and 439-449 (QSANRSPTKKN). Residues 451–464 (WSRENKLTEVRDPQ) show a composition bias toward basic and acidic residues.

The protein belongs to the maelstrom family.

The protein resides in the cytoplasm. It is found in the nucleus. Functionally, plays a central role during gametogenesis by repressing transposable elements and preventing their mobilization, which is essential for the germline integrity. Probably acts via the piRNA metabolic process, which mediates the repression of transposable elements during meiosis by forming complexes composed of piRNAs and Piwi proteins and governs the repression of transposons. The polypeptide is Protein maelstrom homolog (mael) (Culex quinquefasciatus (Southern house mosquito)).